A 360-amino-acid chain; its full sequence is Dihydroorotate dehydrogenase (quinone) (360 aa).

FMN contacts are provided by residues 67–71 and Thr91; that span reads AGLDK. Position 71 (Lys71) interacts with substrate. Position 116-120 (116-120) interacts with substrate; it reads NRMGF. Residues Asn145 and Asn176 each coordinate FMN. Asn176 contacts substrate. Ser179 serves as the catalytic Nucleophile. Residue Asn181 participates in substrate binding. Positions 222 and 250 each coordinate FMN. 251 to 252 serves as a coordination point for substrate; the sequence is NT. Residues Gly272, Gly301, and 322 to 323 each bind FMN; that span reads YS.

This sequence belongs to the dihydroorotate dehydrogenase family. Type 2 subfamily. As to quaternary structure, monomer. The cofactor is FMN.

Its subcellular location is the cell membrane. It catalyses the reaction (S)-dihydroorotate + a quinone = orotate + a quinol. The protein operates within pyrimidine metabolism; UMP biosynthesis via de novo pathway; orotate from (S)-dihydroorotate (quinone route): step 1/1. Its function is as follows. Catalyzes the conversion of dihydroorotate to orotate with quinone as electron acceptor. The sequence is that of Dihydroorotate dehydrogenase (quinone) from Deinococcus deserti (strain DSM 17065 / CIP 109153 / LMG 22923 / VCD115).